A 100-amino-acid polypeptide reads, in one-letter code: Large ribosomal subunit protein uL23 (100 aa).

This sequence belongs to the universal ribosomal protein uL23 family. Part of the 50S ribosomal subunit. Contacts protein L29, and trigger factor when it is bound to the ribosome.

Its function is as follows. One of the early assembly proteins it binds 23S rRNA. One of the proteins that surrounds the polypeptide exit tunnel on the outside of the ribosome. Forms the main docking site for trigger factor binding to the ribosome. In Mycobacterium marinum (strain ATCC BAA-535 / M), this protein is Large ribosomal subunit protein uL23.